We begin with the raw amino-acid sequence, 134 residues long: Shikimate kinase (134 aa).

Belongs to the shikimate kinase family.

The protein localises to the cytoplasm. It catalyses the reaction shikimate + ATP = 3-phosphoshikimate + ADP + H(+). Its pathway is metabolic intermediate biosynthesis; chorismate biosynthesis; chorismate from D-erythrose 4-phosphate and phosphoenolpyruvate: step 5/7. This Neisseria gonorrhoeae protein is Shikimate kinase (aroK).